We begin with the raw amino-acid sequence, 184 residues long: ATP synthase subunit delta (184 aa).

Belongs to the ATPase delta chain family. As to quaternary structure, F-type ATPases have 2 components, F(1) - the catalytic core - and F(0) - the membrane proton channel. F(1) has five subunits: alpha(3), beta(3), gamma(1), delta(1), epsilon(1). F(0) has three main subunits: a(1), b(2) and c(10-14). The alpha and beta chains form an alternating ring which encloses part of the gamma chain. F(1) is attached to F(0) by a central stalk formed by the gamma and epsilon chains, while a peripheral stalk is formed by the delta and b chains.

Its subcellular location is the cell membrane. Functionally, f(1)F(0) ATP synthase produces ATP from ADP in the presence of a proton or sodium gradient. F-type ATPases consist of two structural domains, F(1) containing the extramembraneous catalytic core and F(0) containing the membrane proton channel, linked together by a central stalk and a peripheral stalk. During catalysis, ATP synthesis in the catalytic domain of F(1) is coupled via a rotary mechanism of the central stalk subunits to proton translocation. In terms of biological role, this protein is part of the stalk that links CF(0) to CF(1). It either transmits conformational changes from CF(0) to CF(1) or is implicated in proton conduction. This chain is ATP synthase subunit delta, found in Christiangramia forsetii (strain DSM 17595 / CGMCC 1.15422 / KT0803) (Gramella forsetii).